The chain runs to 482 residues: ATP synthase subunit beta, chloroplastic (482 aa).

Residue Gly-162–Thr-169 coordinates ATP.

This sequence belongs to the ATPase alpha/beta chains family. As to quaternary structure, F-type ATPases have 2 components, CF(1) - the catalytic core - and CF(0) - the membrane proton channel. CF(1) has five subunits: alpha(3), beta(3), gamma(1), delta(1), epsilon(1). CF(0) has four main subunits: a(1), b(1), b'(1) and c(9-12).

It is found in the plastid. The protein resides in the chloroplast thylakoid membrane. The enzyme catalyses ATP + H2O + 4 H(+)(in) = ADP + phosphate + 5 H(+)(out). Functionally, produces ATP from ADP in the presence of a proton gradient across the membrane. The catalytic sites are hosted primarily by the beta subunits. This Pleurastrum terricola (Filamentous green alga) protein is ATP synthase subunit beta, chloroplastic.